The following is a 73-amino-acid chain: Conotoxin CnIIIF (73 aa).

Residues 1–19 form the signal peptide; it reads MSKLGVLLTICLLLFPLTA. Residues 20 to 51 constitute a propeptide that is removed on maturation; sequence LPMDGDQSVDRPAERMQDDISSGQHPLFNQKR. Intrachain disulfides connect Cys53-Cys72, Cys54-Cys70, and Cys60-Cys73.

Belongs to the conotoxin M superfamily. In terms of tissue distribution, expressed by the venom duct.

The protein resides in the secreted. Shows a paralytic effect in fish. This chain is Conotoxin CnIIIF, found in Conus consors (Singed cone).